Consider the following 420-residue polypeptide: Alpha-ketoglutarate-dependent xanthine dioxygenase xan-1 (420 aa).

Residues His-157 and Asp-159 each coordinate Fe cation. 2 residues coordinate 2-oxoglutarate: Thr-206 and Trp-336. Fe cation is bound at residue His-351. Arg-366 is a 2-oxoglutarate binding site. Arg-366 contacts substrate.

Belongs to the TfdA dioxygenase family. It depends on Fe(2+) as a cofactor.

The protein resides in the cytoplasm. It is found in the cytosol. It carries out the reaction xanthine + 2-oxoglutarate + O2 = urate + succinate + CO2. Its function is as follows. Alpha-ketoglutarate-dependent xanthine dioxygenase is a non-heme mononuclear Fe(2+) enzyme that decarboxylates alpha-ketoglutarate to succinate and CO(2) while hydroxylating xanthine to generate uric acid. Allows xanthine utilization as a nitrogen source. This is Alpha-ketoglutarate-dependent xanthine dioxygenase xan-1 from Neurospora crassa (strain ATCC 24698 / 74-OR23-1A / CBS 708.71 / DSM 1257 / FGSC 987).